Reading from the N-terminus, the 607-residue chain is UvrABC system protein C (607 aa).

The 79-residue stretch at 16–94 folds into the GIY-YIG domain; sequence GRPGVYRMFD…IKEWRPPYNI (79 aa). Positions 203 to 238 constitute a UVR domain; that stretch reads QQLGNELNAEMEKAAMALNFEKAAELRDQIALLRRV.

It belongs to the UvrC family. As to quaternary structure, interacts with UvrB in an incision complex.

Its subcellular location is the cytoplasm. The UvrABC repair system catalyzes the recognition and processing of DNA lesions. UvrC both incises the 5' and 3' sides of the lesion. The N-terminal half is responsible for the 3' incision and the C-terminal half is responsible for the 5' incision. This chain is UvrABC system protein C, found in Pseudomonas entomophila (strain L48).